Reading from the N-terminus, the 761-residue chain is Protein transport protein SEC23 C (761 aa).

The Zn(2+) site is built by cysteine 60, cysteine 63, cysteine 82, and cysteine 85. The segment at 60–85 (CRTCRSVLNPYSVVDFSACNWGCPFC) is zinc finger-like.

Belongs to the SEC23/SEC24 family. SEC24 subfamily. Component of the coat protein complex II (COPII), composed of at least five proteins: the Sec23/24 complex, the Sec13/31 complex and Sar1.

It is found in the cytoplasmic vesicle. It localises to the COPII-coated vesicle membrane. The protein localises to the endoplasmic reticulum membrane. The protein resides in the membrane. Its function is as follows. Component of the coat protein complex II (COPII) which promotes the formation of transport vesicles from the endoplasmic reticulum (ER). The coat has two main functions, the physical deformation of the endoplasmic reticulum membrane into vesicles and the selection of cargo molecules. This is Protein transport protein SEC23 C from Arabidopsis thaliana (Mouse-ear cress).